A 275-amino-acid chain; its full sequence is ATP synthase subunit delta (275 aa).

The protein belongs to the ATPase delta chain family. As to quaternary structure, F-type ATPases have 2 components, F(1) - the catalytic core - and F(0) - the membrane proton channel. F(1) has five subunits: alpha(3), beta(3), gamma(1), delta(1), epsilon(1). F(0) has three main subunits: a(1), b(2) and c(10-14). The alpha and beta chains form an alternating ring which encloses part of the gamma chain. F(1) is attached to F(0) by a central stalk formed by the gamma and epsilon chains, while a peripheral stalk is formed by the delta and b chains.

The protein resides in the cell membrane. F(1)F(0) ATP synthase produces ATP from ADP in the presence of a proton or sodium gradient. F-type ATPases consist of two structural domains, F(1) containing the extramembraneous catalytic core and F(0) containing the membrane proton channel, linked together by a central stalk and a peripheral stalk. During catalysis, ATP synthesis in the catalytic domain of F(1) is coupled via a rotary mechanism of the central stalk subunits to proton translocation. Functionally, this protein is part of the stalk that links CF(0) to CF(1). It either transmits conformational changes from CF(0) to CF(1) or is implicated in proton conduction. The protein is ATP synthase subunit delta of Arthrobacter sp. (strain FB24).